The following is a 212-amino-acid chain: FMN-dependent NAD(P)H:quinone oxidoreductase 1 (212 aa).

Residues Ser10, 16 to 18 (SQS), and 97 to 100 (MYNF) each bind FMN. Substrate-binding residues include Asn99 and Tyr131. FMN-binding positions include 145–148 (SRGG) and Glu187. Substrate is bound at residue Glu188.

It belongs to the azoreductase type 1 family. In terms of assembly, homodimer. Homotetramer formed by a dimer of dimers when the ionic strength is high. FMN serves as cofactor.

It catalyses the reaction 2 a quinone + NADPH + H(+) = 2 a 1,4-benzosemiquinone + NADP(+). The catalysed reaction is 2 a quinone + NADH + H(+) = 2 a 1,4-benzosemiquinone + NAD(+). It carries out the reaction N,N-dimethyl-1,4-phenylenediamine + anthranilate + 2 NAD(+) = 2-(4-dimethylaminophenyl)diazenylbenzoate + 2 NADH + 2 H(+). Its activity is regulated as follows. Azoreductase activity increases with salt strength. Quinone reductase that provides resistance to thiol-specific stress caused by electrophilic quinones. Shows a preference for benzoquinones. Its function is as follows. Also exhibits azoreductase activity. Catalyzes the reductive cleavage of the azo bond in aromatic azo compounds to the corresponding amines. NADPH is the preferred electron donor for azoreductase activity, but it can also use NADH. Can reduce different classes of azo dyes, including the common azo dyes methyl red and p-aminoazobenzene sulfonamide (PAABSA). Can activate several azo pro-drugs used in the treatment of inflammatory bowel disease (IBD), including balsalazide, sulfasalazine and olsalazine. Also acts as a nitrodeductase, and can reduce and hence activate the nitroaromatic drug nitrofurazone, a broad spectrum antibiotic. The sequence is that of FMN-dependent NAD(P)H:quinone oxidoreductase 1 from Pseudomonas aeruginosa (strain ATCC 15692 / DSM 22644 / CIP 104116 / JCM 14847 / LMG 12228 / 1C / PRS 101 / PAO1).